The primary structure comprises 483 residues: Phloretin 2'-O-glucosyltransferase (483 aa).

His15 functions as the Proton acceptor in the catalytic mechanism. Position 15 (His15) interacts with an anthocyanidin. Asp118 (charge relay) is an active-site residue. UDP-alpha-D-glucose is bound by residues Thr140, Ala360, Gln362, His377, Trp380, Asn381, Ser382, and Glu385. Ala400 is an an anthocyanidin binding site. Positions 401 and 402 each coordinate UDP-alpha-D-glucose.

This sequence belongs to the UDP-glycosyltransferase family. In terms of tissue distribution, highly expressed in roots and at lower levels in leaves, flowers and fruits.

It catalyses the reaction phloretin + UDP-alpha-D-glucose = phlorizin + UDP + H(+). Glycosyltransferase that possesses phloretin 2'-O-glycosyltransferase activity. Converts phloretin to phlorizin (phloretin 2'-O-glucoside), a potent antioxidant. Is specific for phloretin and does not possess glycosyltransferase activity toward caffeic acid, catechin, chlorogenic acid, 2-coumaric acid, 3-coumaric acid, 4-coumaric acid, cyanidin, 3,4-dihydroxyhydrocinnamic acid, epicatechin, 3-hydroxybenzoic acid, naringenin, 3,4-dihydroxybenzoic acid, quercetin and rutin. Can glycosylate phloretin in the presence of UDP-glucose, UDP-xylose and UDP-galactose. This Malus domestica (Apple) protein is Phloretin 2'-O-glucosyltransferase.